A 1744-amino-acid chain; its full sequence is Complement C4-A (1744 aa).

An N-terminal signal peptide occupies residues 1-19; sequence MRLLWGLIWASSFFTLSLQ. A disulfide bond links cysteine 68 and cysteine 97. Asparagine 226 is a glycosylation site (N-linked (GlcNAc...) asparagine). Cysteine 635 and cysteine 669 are oxidised to a cystine. Positions 676–679 are excised as a propeptide; the sequence is RKKR. Disulfide bonds link cysteine 702/cysteine 728, cysteine 703/cysteine 735, and cysteine 716/cysteine 736. In terms of domain architecture, Anaphylatoxin-like spans 702–736; that stretch reads CCQDGVTRLPMMRSCEQRAARVQQPDCREPFLSCC. Asparagine 862 carries an N-linked (GlcNAc...) asparagine glycan. At serine 918 the chain carries Phosphoserine; by FAM20C. The isoglutamyl cysteine thioester (Cys-Gln) cross-link spans 1010-1013; sequence CGEQ. O-linked (GalNAc...) threonine glycosylation is present at threonine 1244. N-linked (GlcNAc...) (complex) asparagine glycosylation occurs at asparagine 1328. Asparagine 1391 carries N-linked (GlcNAc...) asparagine glycosylation. Tyrosine 1417, tyrosine 1420, and tyrosine 1422 each carry sulfotyrosine. A propeptide spanning residues 1447-1453 is cleaved from the precursor; sequence RRNRRRR. Intrachain disulfides connect cysteine 1471/cysteine 1535, cysteine 1583/cysteine 1588, cysteine 1595/cysteine 1673, cysteine 1618/cysteine 1742, and cysteine 1718/cysteine 1727. The NTR domain occupies 1595–1742; it reads CPRQRRALER…FLQEYGTQGC (148 aa).

As to quaternary structure, complement circulates in blood as a disulfide-linked trimer of an alpha, beta and gamma chain. Complement C4b is composed of complement C4b-A, complement C4 beta and complement C4 gamma chains that are associated via disulfide bonds. Non-enzymatic component of the C3 convertase, also named C4bC2b, composed of the serine protease complement C2b (C2), as well as complement C4b. Non-enzymatic component of the C5 convertase, also named C4bC2bC3b, composed of the serine protease complement C2b (C2), complement C3b, as well as complement C4b. Post-translationally, prior to secretion, the single-chain precursor is enzymatically cleaved by plasminogen (PLG) to yield non-identical chains alpha, beta and gamma. During activation of the complement systems, the alpha chain is cleaved into C4a and C4b by different proteases depending on the complement pathway: C4b stays linked to the beta and gamma chains, while C4a is released in the plasma. The alpha chain is cleaved by C1S to generate C4a and C4b following activation by the classical complement system. The alpha chain is cleaved to generate C4a and C4b by MASP2 following activation by the lectin complement system. The alpha chain is cleaved by GZMK to generate C4a and C4b following activation by the GZMK complement system. Further degradation of C4b by C1 into the inactive fragments C4c and C4d blocks the generation of C3 convertase. The proteolytic cleavages often are incomplete so that many structural forms can be found in plasma. In terms of processing, upon activation, the internal thioester bond reacts with carbohydrate antigens on the target surface to form amide or ester bonds, leading to covalent association with the surface of pathogens. Ser-1236 of complement C4b interacts with complement C3b via a thioester linkage. Post-translationally, N- and O-glycosylated. O-glycosylated with a core 1 or possibly core 8 glycan. Complement component C4 is expressed at highest levels in the liver, at moderate levels in the adrenal cortex, adrenal medulla, thyroid gland, and the kidney, and at lowest levels in the heart, ovary, small intestine, thymus, pancreas and spleen. The extra-hepatic sites of expression may be important for the local protection and inflammatory response.

The protein resides in the secreted. Its subcellular location is the synapse. The protein localises to the cell projection. It localises to the axon. It is found in the dendrite. The protein resides in the cell surface. With respect to regulation, specifically inhibited by nanobody hC4Nb8, inhibiting the classical complement pathway. Specifically inhibited by NbB5, NbE11 and NbH9 nanobodies, and to a lesser extent by NbH11 and NbE3 nanobodies. Its function is as follows. Precursor of non-enzymatic components of the classical, lectin and GZMK complement pathways, which consist in a cascade of proteins that leads to phagocytosis and breakdown of pathogens and signaling that strengthens the adaptive immune system. Functionally, non-enzymatic component of C3 and C5 convertases. Generated following cleavage by complement proteases (C1S, MASP2 or GZMK, depending on the complement pathway), it covalently attaches to the surface of pathogens, where it acts as an opsonin that marks the surface of antigens for removal. It then recruits the serine protease complement C2b to form the C3 and C5 convertases, which cleave and activate C3 and C5, respectively, the next components of the complement pathways. Complement C4b-A isotype is responsible for effective binding to form amide bonds with immune aggregates or protein antigens, while complement C4b-B isotype catalyzes the transacylation of the thioester carbonyl group to form ester bonds with carbohydrate antigens. In terms of biological role, putative humoral mediator released following cleavage by complement proteases (C1S, MASP2 or GZMK, depending on the complement pathway). While it is strongly similar to anaphylatoxins, its role is unclear. Was reported to act as a mediator of local inflammatory process; however these effects were probably due to contamination with C3a and/C5a anaphylatoxins in biological assays. This Homo sapiens (Human) protein is Complement C4-A.